Reading from the N-terminus, the 54-residue chain is U-reduvitoxin-Pr7a (54 aa).

Residues 1-23 (MDFLRILLFVLACIMALFTSAIA) form the signal peptide. 3 disulfides stabilise this stretch: C26–C41, C33–C46, and C40–C53.

The protein belongs to the venom Ptu1-like knottin family. Expressed by the venom gland.

It is found in the secreted. Functionally, binds reversibly and blocks P/Q-type voltage-gated calcium channels (Cav). In Platymeris rhadamanthus (Red spot assassin bug), this protein is U-reduvitoxin-Pr7a.